A 295-amino-acid chain; its full sequence is Bifunctional protein FolD (295 aa).

Residues 167-169, serine 192, and isoleucine 233 each bind NADP(+); that span reads GRS.

The protein belongs to the tetrahydrofolate dehydrogenase/cyclohydrolase family. As to quaternary structure, homodimer.

It carries out the reaction (6R)-5,10-methylene-5,6,7,8-tetrahydrofolate + NADP(+) = (6R)-5,10-methenyltetrahydrofolate + NADPH. The enzyme catalyses (6R)-5,10-methenyltetrahydrofolate + H2O = (6R)-10-formyltetrahydrofolate + H(+). It participates in one-carbon metabolism; tetrahydrofolate interconversion. Catalyzes the oxidation of 5,10-methylenetetrahydrofolate to 5,10-methenyltetrahydrofolate and then the hydrolysis of 5,10-methenyltetrahydrofolate to 10-formyltetrahydrofolate. The polypeptide is Bifunctional protein FolD (Paramagnetospirillum magneticum (strain ATCC 700264 / AMB-1) (Magnetospirillum magneticum)).